A 20-amino-acid chain; its full sequence is Brevinin-1DYa (20 aa).

Cys14 and Cys20 form a disulfide bridge.

In terms of tissue distribution, expressed by the skin glands.

It localises to the secreted. In terms of biological role, antimicrobial peptide. Has low activity against the Gram-positive bacterium S.aureus and the Gram-negative bacterium E.coli (MIC&lt;15 uM). Has a strong hemolytic activity. In Rana dybowskii (Dybovsky's frog), this protein is Brevinin-1DYa.